The following is a 197-amino-acid chain: Small ribosomal subunit protein uS2 (197 aa).

It belongs to the universal ribosomal protein uS2 family.

The polypeptide is Small ribosomal subunit protein uS2 (rps2) (Archaeoglobus fulgidus (strain ATCC 49558 / DSM 4304 / JCM 9628 / NBRC 100126 / VC-16)).